We begin with the raw amino-acid sequence, 397 residues long: Succinate--CoA ligase [ADP-forming] subunit beta (397 aa).

The ATP-grasp domain maps to 9-254 (KALLKGYGAP…ETEEDAKEIE (246 aa)). Residues Lys-46, 53–55 (GRG), Glu-109, Ala-112, and Glu-117 contribute to the ATP site. Residues Asn-209 and Asp-223 each coordinate Mg(2+). Substrate is bound by residues Asn-274 and 331-333 (GIM).

The protein belongs to the succinate/malate CoA ligase beta subunit family. Heterotetramer of two alpha and two beta subunits. Mg(2+) serves as cofactor.

It catalyses the reaction succinate + ATP + CoA = succinyl-CoA + ADP + phosphate. The enzyme catalyses GTP + succinate + CoA = succinyl-CoA + GDP + phosphate. It functions in the pathway carbohydrate metabolism; tricarboxylic acid cycle; succinate from succinyl-CoA (ligase route): step 1/1. Its function is as follows. Succinyl-CoA synthetase functions in the citric acid cycle (TCA), coupling the hydrolysis of succinyl-CoA to the synthesis of either ATP or GTP and thus represents the only step of substrate-level phosphorylation in the TCA. The beta subunit provides nucleotide specificity of the enzyme and binds the substrate succinate, while the binding sites for coenzyme A and phosphate are found in the alpha subunit. This Rhizobium etli (strain CIAT 652) protein is Succinate--CoA ligase [ADP-forming] subunit beta.